Consider the following 341-residue polypeptide: Uroporphyrinogen decarboxylase (341 aa).

Substrate-binding positions include 26-30 (RQAGR), aspartate 75, tyrosine 150, serine 205, and histidine 318.

The protein belongs to the uroporphyrinogen decarboxylase family. In terms of assembly, homodimer.

The protein resides in the cytoplasm. It carries out the reaction uroporphyrinogen III + 4 H(+) = coproporphyrinogen III + 4 CO2. The protein operates within porphyrin-containing compound metabolism; protoporphyrin-IX biosynthesis; coproporphyrinogen-III from 5-aminolevulinate: step 4/4. Catalyzes the decarboxylation of four acetate groups of uroporphyrinogen-III to yield coproporphyrinogen-III. The polypeptide is Uroporphyrinogen decarboxylase (Thermus thermophilus (strain ATCC 27634 / DSM 579 / HB8)).